We begin with the raw amino-acid sequence, 293 residues long: Pyridoxal 5'-phosphate synthase subunit PdxS (293 aa).

Residue D23 participates in D-ribose 5-phosphate binding. K80 (schiff-base intermediate with D-ribose 5-phosphate) is an active-site residue. G152 is a binding site for D-ribose 5-phosphate. R164 lines the D-glyceraldehyde 3-phosphate pocket. D-ribose 5-phosphate is bound by residues G213 and 234-235; that span reads GS.

Belongs to the PdxS/SNZ family. As to quaternary structure, in the presence of PdxT, forms a dodecamer of heterodimers.

It carries out the reaction aldehydo-D-ribose 5-phosphate + D-glyceraldehyde 3-phosphate + L-glutamine = pyridoxal 5'-phosphate + L-glutamate + phosphate + 3 H2O + H(+). The protein operates within cofactor biosynthesis; pyridoxal 5'-phosphate biosynthesis. Catalyzes the formation of pyridoxal 5'-phosphate from ribose 5-phosphate (RBP), glyceraldehyde 3-phosphate (G3P) and ammonia. The ammonia is provided by the PdxT subunit. Can also use ribulose 5-phosphate and dihydroxyacetone phosphate as substrates, resulting from enzyme-catalyzed isomerization of RBP and G3P, respectively. This chain is Pyridoxal 5'-phosphate synthase subunit PdxS, found in Chloroflexus aurantiacus (strain ATCC 29366 / DSM 635 / J-10-fl).